The primary structure comprises 184 residues: Interferon alpha-2 (184 aa).

Residues 1-23 (MALPFSLLMALVVLSCHSSCSLG) form the signal peptide. Intrachain disulfides connect Cys-24–Cys-122 and Cys-52–Cys-162.

This sequence belongs to the alpha/beta interferon family. As to quaternary structure, interacts with IFNAR2.

Its subcellular location is the secreted. Produced by macrophages, IFN-alpha have antiviral activities. This chain is Interferon alpha-2, found in Equus caballus (Horse).